The sequence spans 441 residues: Transcriptional regulatory protein ZraR (441 aa).

Residues 7–121 (DILVVDDDIS…NLQATLEKAL (115 aa)) enclose the Response regulatory domain. Asp56 is modified (4-aspartylphosphate). Residues 141–370 (MVGKSPAMQH…LENAVERAVV (230 aa)) form the Sigma-54 factor interaction domain. The ATP site is built by Gly172, Thr173, Arg329, and Arg359. The segment at residues 421–440 (KTEAARQLGITRKTLLAKLS) is a DNA-binding region (H-T-H motif).

In terms of processing, phosphorylated by ZraS.

Its subcellular location is the cytoplasm. Its activity is regulated as follows. Activity of the ZraS/ZraR two-component system is repressed by the zinc-bound form of ZraP, which probably interacts with the periplasmic region of ZraS. Part of the Zra signaling pathway, an envelope stress response (ESR) system composed of the periplasmic accessory protein ZraP, the histidine kinase ZraS and the transcriptional regulator ZraR. The ZraPSR system contributes to antibiotic resistance and is important for membrane integrity in the presence of membrane-targeting biocides. ZraR is a member of the two-component regulatory system ZraS/ZraR. When activated by ZraS, acts in conjunction with sigma-54 to regulate the expression of zraP in the presence of high Zn(2+) or Pb(2+) concentrations. Also positively autoregulates the expression of the zraSR operon. The protein is Transcriptional regulatory protein ZraR (zraR) of Escherichia coli O157:H7.